A 271-amino-acid polypeptide reads, in one-letter code: Delta(3,5)-Delta(2,4)-dienoyl-CoA isomerase (271 aa).

Substrate is bound by residues 62-66 (SGGKF) and leucine 120. Glutamate 152 acts as the Proton donor/acceptor in catalysis. A Peroxisome targeting signal (PTS1) motif is present at residues 269-271 (HKL).

The protein belongs to the enoyl-CoA hydratase/isomerase family. In terms of assembly, interacts with ECI1.

The protein localises to the peroxisome. It carries out the reaction a (3E,5Z)-dienoyl-CoA = a (2E,4E)-(5,6-saturated)-dienoyl-CoA. It participates in lipid metabolism; fatty acid beta-oxidation. In terms of biological role, peroxisomal di-isomerase that is involved in fatty acid metabolism enzyme by converting 3,5-dienoyl-CoAs to the corresponding 2,4-dienoyl-CoAs. Required for ECI1 to be located to the peroxisome. In Saccharomyces cerevisiae (strain ATCC 204508 / S288c) (Baker's yeast), this protein is Delta(3,5)-Delta(2,4)-dienoyl-CoA isomerase.